Consider the following 377-residue polypeptide: Succinyl-diaminopimelate desuccinylase (377 aa).

Histidine 68 lines the Zn(2+) pocket. The active site involves aspartate 70. Aspartate 101 contacts Zn(2+). Catalysis depends on glutamate 135, which acts as the Proton acceptor. Residues glutamate 136, glutamate 164, and histidine 350 each coordinate Zn(2+).

This sequence belongs to the peptidase M20A family. DapE subfamily. In terms of assembly, homodimer. Zn(2+) is required as a cofactor. Requires Co(2+) as cofactor.

The enzyme catalyses N-succinyl-(2S,6S)-2,6-diaminopimelate + H2O = (2S,6S)-2,6-diaminopimelate + succinate. It participates in amino-acid biosynthesis; L-lysine biosynthesis via DAP pathway; LL-2,6-diaminopimelate from (S)-tetrahydrodipicolinate (succinylase route): step 3/3. Catalyzes the hydrolysis of N-succinyl-L,L-diaminopimelic acid (SDAP), forming succinate and LL-2,6-diaminopimelate (DAP), an intermediate involved in the bacterial biosynthesis of lysine and meso-diaminopimelic acid, an essential component of bacterial cell walls. This Acinetobacter baumannii (strain AB0057) protein is Succinyl-diaminopimelate desuccinylase.